A 158-amino-acid chain; its full sequence is NAD(P)H-quinone oxidoreductase subunit J, chloroplastic (158 aa).

The protein belongs to the complex I 30 kDa subunit family. NDH is composed of at least 16 different subunits, 5 of which are encoded in the nucleus.

The protein localises to the plastid. It is found in the chloroplast thylakoid membrane. The enzyme catalyses a plastoquinone + NADH + (n+1) H(+)(in) = a plastoquinol + NAD(+) + n H(+)(out). The catalysed reaction is a plastoquinone + NADPH + (n+1) H(+)(in) = a plastoquinol + NADP(+) + n H(+)(out). Functionally, NDH shuttles electrons from NAD(P)H:plastoquinone, via FMN and iron-sulfur (Fe-S) centers, to quinones in the photosynthetic chain and possibly in a chloroplast respiratory chain. The immediate electron acceptor for the enzyme in this species is believed to be plastoquinone. Couples the redox reaction to proton translocation, and thus conserves the redox energy in a proton gradient. In Illicium oligandrum (Star anise), this protein is NAD(P)H-quinone oxidoreductase subunit J, chloroplastic.